Reading from the N-terminus, the 72-residue chain is Delta-actitoxin-Avd2b 1 (72 aa).

Residues 1 to 21 (MMNRLLVFLMLGAAFMLVVSA) form the signal peptide. Residues 22 to 42 (NDAYGDEPAFKDLNQGDESLG) constitute a propeptide that is removed on maturation. 3 disulfides stabilise this stretch: Cys-47/Cys-62, Cys-48/Cys-56, and Cys-50/Cys-67.

It belongs to the sea anemone short toxin (type III) family.

The protein resides in the secreted. The protein localises to the nematocyst. Functionally, voltage-gated sodium channel (Nav) inhibitor. 1 uM completely inhibits insect voltage-gated sodium channel inactivation (DmNav1 from D.melanogaster). The polypeptide is Delta-actitoxin-Avd2b 1 (Anemonia viridis (Snakelocks anemone)).